The following is an 831-amino-acid chain: Translation initiation factor IF-2 (831 aa).

The span at 1–11 (MADEIKKENAP) shows a compositional bias: basic and acidic residues. The disordered stretch occupies residues 1 to 236 (MADEIKKENA…GKHAKKASAL (236 aa)). The segment covering 22 to 31 (TTVSGTSTTG) has biased composition (low complexity). Basic and acidic residues-rich tracts occupy residues 49–150 (DLER…RYAD) and 157–166 (DNGKLDDYSD). The segment covering 190 to 200 (RSKNKVVKAKK) has biased composition (basic residues). Residues 201–225 (GGRDDENGNKNERQSDRRNQKDVKG) show a composition bias toward basic and acidic residues. The tr-type G domain maps to 330–500 (HRAPVVTIMG…LLQSEVLELT (171 aa)). A G1 region spans residues 339-346 (GHVDHGKT). GTP is bound at residue 339–346 (GHVDHGKT). Residues 364–368 (GITQH) form a G2 region. Positions 386 to 389 (DTPG) are G3. GTP contacts are provided by residues 386-390 (DTPGH) and 440-443 (NKID). The tract at residues 440 to 443 (NKID) is G4. The segment at 476–478 (SAK) is G5.

The protein belongs to the TRAFAC class translation factor GTPase superfamily. Classic translation factor GTPase family. IF-2 subfamily.

The protein resides in the cytoplasm. One of the essential components for the initiation of protein synthesis. Protects formylmethionyl-tRNA from spontaneous hydrolysis and promotes its binding to the 30S ribosomal subunits. Also involved in the hydrolysis of GTP during the formation of the 70S ribosomal complex. This chain is Translation initiation factor IF-2, found in Histophilus somni (strain 2336) (Haemophilus somnus).